We begin with the raw amino-acid sequence, 78 residues long: Beta sliding clamp (78 aa).

The protein belongs to the beta sliding clamp family. As to quaternary structure, forms a ring-shaped head-to-tail homodimer around DNA which binds and tethers DNA polymerases and other proteins to the DNA. The DNA replisome complex has a single clamp-loading complex (3 tau and 1 each of delta, delta', psi and chi subunits) which binds 3 Pol III cores (1 core on the leading strand and 2 on the lagging strand) each with a beta sliding clamp dimer. Additional proteins in the replisome are other copies of gamma, psi and chi, Ssb, DNA helicase and RNA primase.

The protein localises to the cytoplasm. Its function is as follows. Confers DNA tethering and processivity to DNA polymerases and other proteins. Acts as a clamp, forming a ring around DNA (a reaction catalyzed by the clamp-loading complex) which diffuses in an ATP-independent manner freely and bidirectionally along dsDNA. Initially characterized for its ability to contact the catalytic subunit of DNA polymerase III (Pol III), a complex, multichain enzyme responsible for most of the replicative synthesis in bacteria; Pol III exhibits 3'-5' exonuclease proofreading activity. The beta chain is required for initiation of replication as well as for processivity of DNA replication. This chain is Beta sliding clamp (dnaN), found in Serratia marcescens.